Reading from the N-terminus, the 432-residue chain is Adenylosuccinate synthetase (432 aa).

GTP contacts are provided by residues 12–18 (GDEGKGK) and 40–42 (GHT). The Proton acceptor role is filled by D13. Mg(2+)-binding residues include D13 and G40. Residues 13 to 16 (DEGK), 38 to 41 (NAGH), T130, R144, Q225, T240, and R304 contribute to the IMP site. The active-site Proton donor is H41. 300–306 (STTGRPR) is a binding site for substrate. GTP is bound by residues R306, 332–334 (KLD), and 414–416 (SVG).

It belongs to the adenylosuccinate synthetase family. Homodimer. Requires Mg(2+) as cofactor.

The protein resides in the cytoplasm. The enzyme catalyses IMP + L-aspartate + GTP = N(6)-(1,2-dicarboxyethyl)-AMP + GDP + phosphate + 2 H(+). It functions in the pathway purine metabolism; AMP biosynthesis via de novo pathway; AMP from IMP: step 1/2. Functionally, plays an important role in the de novo pathway of purine nucleotide biosynthesis. Catalyzes the first committed step in the biosynthesis of AMP from IMP. This is Adenylosuccinate synthetase from Geobacter sp. (strain M21).